Reading from the N-terminus, the 107-residue chain is Thioredoxin (107 aa).

A Thioredoxin domain is found at 2 to 107 (SVSQVTDASF…LESTLNKYIS (106 aa)). Residues C31 and C34 each act as nucleophile in the active site. A disulfide bridge links C31 with C34.

This sequence belongs to the thioredoxin family.

It is found in the plastid. The protein resides in the chloroplast. In terms of biological role, participates in various redox reactions through the reversible oxidation of its active center dithiol to a disulfide and catalyzes dithiol-disulfide exchange reactions. The sequence is that of Thioredoxin (trxA) from Porphyra purpurea (Red seaweed).